Consider the following 293-residue polypeptide: Acetylglutamate kinase (293 aa).

Residues 66 to 67 (GG), Arg88, and Asn190 each bind substrate.

The protein belongs to the acetylglutamate kinase family. ArgB subfamily.

The protein resides in the cytoplasm. It carries out the reaction N-acetyl-L-glutamate + ATP = N-acetyl-L-glutamyl 5-phosphate + ADP. It functions in the pathway amino-acid biosynthesis; L-arginine biosynthesis; N(2)-acetyl-L-ornithine from L-glutamate: step 2/4. In terms of biological role, catalyzes the ATP-dependent phosphorylation of N-acetyl-L-glutamate. The polypeptide is Acetylglutamate kinase (Thiobacillus denitrificans (strain ATCC 25259 / T1)).